The sequence spans 168 residues: Peptide methionine sulfoxide reductase MsrA 2 (168 aa).

C11 is an active-site residue.

Belongs to the MsrA Met sulfoxide reductase family.

It carries out the reaction L-methionyl-[protein] + [thioredoxin]-disulfide + H2O = L-methionyl-(S)-S-oxide-[protein] + [thioredoxin]-dithiol. It catalyses the reaction [thioredoxin]-disulfide + L-methionine + H2O = L-methionine (S)-S-oxide + [thioredoxin]-dithiol. Its function is as follows. Has an important function as a repair enzyme for proteins that have been inactivated by oxidation. Catalyzes the reversible oxidation-reduction of methionine sulfoxide in proteins to methionine. This Rhodopirellula baltica (strain DSM 10527 / NCIMB 13988 / SH1) protein is Peptide methionine sulfoxide reductase MsrA 2.